Here is a 553-residue protein sequence, read N- to C-terminus: Syntaxin-binding protein 4 (553 aa).

Residues serine 10, serine 12, serine 99, and serine 212 each carry the phosphoserine modification. The PDZ domain maps to 19 to 105 (AFQMITIAKE…RLESAWEIAF (87 aa)). Positions 291–417 (SSEADEMERL…VLDCQLRKSE (127 aa)) form a coiled coil. Serine 463 is modified (phosphoserine). A WW domain is found at 496 to 529 (DCLPYGWEEAYTADGIKYFINHVTQTTSWIHPVM).

As to quaternary structure, interacts with STX4A. Post-translationally, phosphorylated on Ser-99 by PKB/AKT2 after insulin treatment. Phosphorylation on Ser-99 abolishes the interaction with STX4A.

It is found in the cytoplasm. Plays a role in the translocation of transport vesicles from the cytoplasm to the plasma membrane. Inhibits the translocation of SLC2A4 from intracellular vesicles to the plasma membrane by STX4A binding and preventing the interaction between STX4A and VAMP2. Stimulation with insulin disrupts the interaction with STX4A, leading to increased levels of SLC2A4 at the plasma membrane. May also play a role in the regulation of insulin release by pancreatic beta cells after stimulation by glucose. This is Syntaxin-binding protein 4 (STXBP4) from Homo sapiens (Human).